Reading from the N-terminus, the 166-residue chain is Heavy metal-associated isoprenylated plant protein 45 (166 aa).

Residues 15 to 78 (LSIVELLVDM…MVKRTGRTAE (64 aa)) form the HMA domain. A metal cation-binding residues include Cys-26 and Cys-29. Cys-163 carries the cysteine methyl ester modification. Cys-163 carries S-farnesyl cysteine lipidation. A propeptide spans 164-166 (TIM) (removed in mature form).

Belongs to the HIPP family.

In terms of biological role, heavy-metal-binding protein. This chain is Heavy metal-associated isoprenylated plant protein 45, found in Arabidopsis thaliana (Mouse-ear cress).